Here is a 261-residue protein sequence, read N- to C-terminus: Leucyl/phenylalanyl-tRNA--protein transferase (261 aa).

Belongs to the L/F-transferase family.

Its subcellular location is the cytoplasm. The catalysed reaction is N-terminal L-lysyl-[protein] + L-leucyl-tRNA(Leu) = N-terminal L-leucyl-L-lysyl-[protein] + tRNA(Leu) + H(+). It carries out the reaction N-terminal L-arginyl-[protein] + L-leucyl-tRNA(Leu) = N-terminal L-leucyl-L-arginyl-[protein] + tRNA(Leu) + H(+). The enzyme catalyses L-phenylalanyl-tRNA(Phe) + an N-terminal L-alpha-aminoacyl-[protein] = an N-terminal L-phenylalanyl-L-alpha-aminoacyl-[protein] + tRNA(Phe). In terms of biological role, functions in the N-end rule pathway of protein degradation where it conjugates Leu, Phe and, less efficiently, Met from aminoacyl-tRNAs to the N-termini of proteins containing an N-terminal arginine or lysine. This chain is Leucyl/phenylalanyl-tRNA--protein transferase, found in Yersinia pestis bv. Antiqua (strain Antiqua).